The following is a 1650-amino-acid chain: HEAT repeat-containing protein 1 homolog (1650 aa).

Residues 1183–1210 form a disordered region; sequence QYDSAASPGSSVAGGRGNRGHRIRQQSL. The stretch at 1609-1645 is one HEAT repeat; it reads LLPFLNELIEDENKQVEAQCQKVINSLQHKFGETFWS.

This sequence belongs to the HEATR1/UTP10 family.

The protein resides in the nucleus. The protein localises to the nucleolus. In terms of biological role, involved in nucleolar processing of pre-18S ribosomal RNA. Involved in ribosome biosynthesis. The sequence is that of HEAT repeat-containing protein 1 homolog (toe-1) from Caenorhabditis elegans.